Here is a 527-residue protein sequence, read N- to C-terminus: Heat shock factor protein HSF8 (527 aa).

Positions 1–13 are enriched in low complexity; the sequence is MEPNSSGSGKAAV. Disordered stretches follow at residues 1–37, 130–160, 243–275, 300–343, and 476–501; these read MEPNSSGSGKAAVGDGGGGGAPMLQPAPAPAPMPSAN, RRKPAHGHAQQQQQPHGHAQQQMQPPGHSAS, NESNKRIAEGSKKRRIKQDIESQDPSVTPADGQ, SPRL…TSGK, and QSPSSPDAAMDDDISNTSETKPQING. Pro residues predominate over residues 25–37; the sequence is QPAPAPAPMPSAN. Residues 39–133 mediate DNA binding; sequence PPPFLVKTYD…LLKSISRRKP (95 aa). Residues 136–157 are compositionally biased toward low complexity; the sequence is GHAQQQQQPHGHAQQQMQPPGH. Composition is skewed to polar residues over residues 319 to 328 and 491 to 501; these read SPQSNASSGR and NTSETKPQING.

This sequence belongs to the HSF family. As to quaternary structure, homotrimer. Exhibits temperature-dependent phosphorylation.

Its subcellular location is the nucleus. Functionally, DNA-binding protein that specifically binds heat shock promoter elements (HSE) and activates transcription. In Solanum peruvianum (Peruvian tomato), this protein is Heat shock factor protein HSF8 (HSF8).